The sequence spans 132 residues: Fatty acid-binding protein, adipocyte (132 aa).

Position 2 is an N-acetylcysteine (Cys-2). At Ser-13 the chain carries Phosphoserine. Tyr-20 carries the post-translational modification Phosphotyrosine; by Tyr-kinases. The Nuclear localization signal motif lies at 22-32 (KEVGVGFATRK). 127-129 (RVY) contacts a fatty acid.

Belongs to the calycin superfamily. Fatty-acid binding protein (FABP) family. Monomer. Homodimer. Interacts with PPARG.

The protein resides in the cytoplasm. It localises to the nucleus. Its function is as follows. Lipid transport protein in adipocytes. Binds both long chain fatty acids and retinoic acid. Delivers long-chain fatty acids and retinoic acid to their cognate receptors in the nucleus. The polypeptide is Fatty acid-binding protein, adipocyte (FABP4) (Cervus elaphus (Red deer)).